Reading from the N-terminus, the 226-residue chain is Large ribosomal subunit protein uL1 (226 aa).

Belongs to the universal ribosomal protein uL1 family. In terms of assembly, part of the 50S ribosomal subunit.

Functionally, binds directly to 23S rRNA. The L1 stalk is quite mobile in the ribosome, and is involved in E site tRNA release. Its function is as follows. Protein L1 is also a translational repressor protein, it controls the translation of the L11 operon by binding to its mRNA. The sequence is that of Large ribosomal subunit protein uL1 from Selenomonas ruminantium.